We begin with the raw amino-acid sequence, 135 residues long: Large ribosomal subunit protein uL16c (135 aa).

It belongs to the universal ribosomal protein uL16 family. In terms of assembly, part of the 50S ribosomal subunit.

It is found in the plastid. The protein localises to the chloroplast. In Ceratophyllum demersum (Rigid hornwort), this protein is Large ribosomal subunit protein uL16c.